Consider the following 501-residue polypeptide: Flagellin (501 aa).

This sequence belongs to the bacterial flagellin family.

The protein localises to the secreted. It is found in the bacterial flagellum. Flagellin is the subunit protein which polymerizes to form the filaments of bacterial flagella. This Aquifex pyrophilus protein is Flagellin (flaA).